We begin with the raw amino-acid sequence, 573 residues long: 2-succinyl-5-enolpyruvyl-6-hydroxy-3-cyclohexene-1-carboxylate synthase (573 aa).

The protein belongs to the TPP enzyme family. MenD subfamily. Homodimer. It depends on Mg(2+) as a cofactor. The cofactor is Mn(2+). Thiamine diphosphate is required as a cofactor.

It catalyses the reaction isochorismate + 2-oxoglutarate + H(+) = 5-enolpyruvoyl-6-hydroxy-2-succinyl-cyclohex-3-ene-1-carboxylate + CO2. Its pathway is quinol/quinone metabolism; 1,4-dihydroxy-2-naphthoate biosynthesis; 1,4-dihydroxy-2-naphthoate from chorismate: step 2/7. The protein operates within quinol/quinone metabolism; menaquinone biosynthesis. Catalyzes the thiamine diphosphate-dependent decarboxylation of 2-oxoglutarate and the subsequent addition of the resulting succinic semialdehyde-thiamine pyrophosphate anion to isochorismate to yield 2-succinyl-5-enolpyruvyl-6-hydroxy-3-cyclohexene-1-carboxylate (SEPHCHC). This is 2-succinyl-5-enolpyruvyl-6-hydroxy-3-cyclohexene-1-carboxylate synthase from Shewanella baltica (strain OS155 / ATCC BAA-1091).